We begin with the raw amino-acid sequence, 395 residues long: Vibriobactin-specific isochorismate synthase (395 aa).

It belongs to the isochorismate synthase family.

The catalysed reaction is chorismate = isochorismate. It participates in siderophore biosynthesis; vibriobactin biosynthesis. The protein is Vibriobactin-specific isochorismate synthase (vibC) of Vibrio cholerae serotype O1 (strain ATCC 39315 / El Tor Inaba N16961).